We begin with the raw amino-acid sequence, 209 residues long: Superoxide dismutase [Mn/Fe] (209 aa).

Residues His38, His90, Asp172, and His176 each coordinate Fe(3+). Mn(2+)-binding residues include His38, His90, Asp172, and His176.

It belongs to the iron/manganese superoxide dismutase family. It depends on Mn(2+) as a cofactor. Fe(3+) is required as a cofactor.

It carries out the reaction 2 superoxide + 2 H(+) = H2O2 + O2. Destroys superoxide anion radicals which are normally produced within the cells and which are toxic to biological systems. Catalyzes the dismutation of superoxide anion radicals into O2 and H2O2 by successive reduction and oxidation of the transition metal ion at the active site. The chain is Superoxide dismutase [Mn/Fe] (sodB) from Rickettsia typhi (strain ATCC VR-144 / Wilmington).